Reading from the N-terminus, the 124-residue chain is Small ribosomal subunit protein uS12 (124 aa).

Positions 1-25 are disordered; sequence MPTFNQLVRNGRKPPRWKTSSPALE. D89 bears the 3-methylthioaspartic acid mark. Residues 104–124 are disordered; sequence TAGVANRKQSRSKYGAKRPKS. Over residues 111–124 the composition is skewed to basic residues; it reads KQSRSKYGAKRPKS.

It belongs to the universal ribosomal protein uS12 family. In terms of assembly, part of the 30S ribosomal subunit. Contacts proteins S8 and S17. May interact with IF1 in the 30S initiation complex.

With S4 and S5 plays an important role in translational accuracy. In terms of biological role, interacts with and stabilizes bases of the 16S rRNA that are involved in tRNA selection in the A site and with the mRNA backbone. Located at the interface of the 30S and 50S subunits, it traverses the body of the 30S subunit contacting proteins on the other side and probably holding the rRNA structure together. The combined cluster of proteins S8, S12 and S17 appears to hold together the shoulder and platform of the 30S subunit. The chain is Small ribosomal subunit protein uS12 from Solibacter usitatus (strain Ellin6076).